Here is a 340-residue protein sequence, read N- to C-terminus: Nicotianamine synthase 9 (340 aa).

It belongs to the nicotianamine synthase (NAS)-like family. In terms of assembly, homotrimer.

The catalysed reaction is 3 S-adenosyl-L-methionine = nicotianamine + 3 S-methyl-5'-thioadenosine + 3 H(+). Functionally, synthesizes nicotianamine, a polyamine that is the first intermediate in the synthesis of the phytosiderophores of the mugineic acid type found in gramineae which serves as a sensor for the physiological iron status within the plant, and/or might be involved in the transport of iron. This is Nicotianamine synthase 9 (NAS9) from Hordeum vulgare (Barley).